We begin with the raw amino-acid sequence, 441 residues long: Zinc finger and BTB domain-containing protein 26 (441 aa).

Positions 33–97 (CDVTVLIDDI…CYSGVLEFPE (65 aa)) constitute a BTB domain. The interval 134 to 177 (DSKEGCEPQSASPQSKEQQGDARGSPKQDSPCIHPSEDSMDMED) is disordered. K184 participates in a covalent cross-link: Glycyl lysine isopeptide (Lys-Gly) (interchain with G-Cter in SUMO2). The disordered stretch occupies residues 194–216 (VRSKKDQNQFISSEPTALHSSEP). Positions 201–216 (NQFISSEPTALHSSEP) are enriched in polar residues. K255 participates in a covalent cross-link: Glycyl lysine isopeptide (Lys-Gly) (interchain with G-Cter in SUMO2). C2H2-type zinc fingers lie at residues 273-295 (HQCP…LKMH), 298-320 (FMCL…MRVH), 326-348 (FQCK…LNLH), and 354-377 (HKCN…KQLH). K329 participates in a covalent cross-link: Glycyl lysine isopeptide (Lys-Gly) (interchain with G-Cter in SUMO2).

Ubiquitous.

It is found in the nucleus. Functionally, may be involved in transcriptional regulation. This Homo sapiens (Human) protein is Zinc finger and BTB domain-containing protein 26 (ZBTB26).